The chain runs to 81 residues: High-potential iron-sulfur protein (81 aa).

Cysteine 43, cysteine 46, cysteine 59, and cysteine 73 together coordinate [4Fe-4S] cluster.

Belongs to the high-potential iron-sulfur protein (HiPIP) family. Homodimer.

It is found in the periplasm. In terms of biological role, specific class of high-redox-potential 4Fe-4S ferredoxins. Functions in anaerobic electron transport in most purple and in some other photosynthetic bacteria and in at least one genus (Paracoccus) of halophilic, denitrifying bacteria. The protein is High-potential iron-sulfur protein of Halochromatium salexigens (Chromatium salexigens).